The following is a 942-amino-acid chain: Netrin receptor UNC5B-b (942 aa).

The signal sequence occupies residues 1–30; sequence MYLSRIPGGAALAALLVALLLCCNFPPSIA. The Extracellular portion of the chain corresponds to 31–380; sequence GIEYSDVLPD…LESTGDVALY (350 aa). An Ig-like domain is found at 51–148; it reads PHFLLEPEDA…AGTTKSKRSY (98 aa). 9 cysteine pairs are disulfide-bonded: C72–C133, C84–C131, C177–C228, C261–C298, C265–C302, C276–C288, C317–C351, C321–C356, and C329–C341. Residues 150 to 245 form the Ig-like C2-type domain; it reads RIAYLRKNFD…KRRSTTATVI (96 aa). An N-linked (GlcNAc...) asparagine glycan is attached at N225. 2 TSP type-1 domains span residues 249 to 303 and 305 to 357; these read NGGW…TMCP and DGGW…GLCM. N350 is a glycosylation site (N-linked (GlcNAc...) asparagine). The helical transmembrane segment at 381–401 threads the bilayer; sequence AGLVVAIFIIIILLMAVGIVV. Over 402–942 the chain is Cytoplasmic; that stretch reads YRRNCREFDT…MLVMATDGDC (541 aa). The region spanning 541–684 is the ZU5 domain; sequence NSVTGTFGSL…LGTYAFVGES (144 aa). Residues 687 to 835 form a UPA domain region; that stretch reads RSAIKRLQLA…LEENVKSFDP (149 aa). The Death domain maps to 863–940; it reads ICNSLDAPNS…EMMLVMATDG (78 aa).

This sequence belongs to the unc-5 family. In terms of assembly, interacts (via extracellular domain) with flrt3 (via extracellular domain). Interacts with rnd1.

The protein resides in the cell membrane. Its function is as follows. Plays a role in cell-cell adhesion during embryonic development. Receptor for netrin required for axon guidance. Mediates axon repulsion of neuronal growth cones in the developing nervous system upon ligand binding. This is Netrin receptor UNC5B-b from Xenopus laevis (African clawed frog).